Reading from the N-terminus, the 71-residue chain is Beta-defensin 9 (71 aa).

The first 23 residues, 1-23, serve as a signal peptide directing secretion; the sequence is MRTLCSLLLICCLLFSYDTPVVG. 3 disulfides stabilise this stretch: C37–C66, C44–C59, and C49–C67.

Belongs to the beta-defensin family.

The protein localises to the secreted. Its function is as follows. Has antibacterial activity. The chain is Beta-defensin 9 (Defb9) from Rattus norvegicus (Rat).